Here is a 268-residue protein sequence, read N- to C-terminus: Universal stress protein MT3220 (268 aa).

ATP-binding positions include Gly-13, 107–113, Arg-117, and 120–121; these read GSVGLDH and SV.

Belongs to the universal stress protein A family.

The polypeptide is Universal stress protein MT3220 (Mycobacterium tuberculosis (strain CDC 1551 / Oshkosh)).